We begin with the raw amino-acid sequence, 84 residues long: MVLQNDIDLLHPPPELEKRKHKLKRLVQSPNSFFMDVKCQGCFNITTVFSHSQTVVVCGNCQTVLCQPTGGKARLQEGCSFRKK.

The C4-type zinc-finger motif lies at 39-61 (CQGCFNITTVFSHSQTVVVCGNC).

This sequence belongs to the eukaryotic ribosomal protein eS27 family. It depends on Zn(2+) as a cofactor.

This is Small ribosomal subunit protein eS27w (RPS27D) from Arabidopsis thaliana (Mouse-ear cress).